Reading from the N-terminus, the 161-residue chain is MKISQFGSLAFAPIVLLQLFIVQAQLLTDSNAQDLNTALGQKVQYTFLDTGNSNDQLLHLPSTTSSSIITGSLAAANFTGSSSSSSIPKVTSSVITSINYQSSNSTVVTQFTPLPSSSRNETKSSQTTNTISSSTSTGGVGSVKPCLYFVLMLETIAYLFS.

Residues 1–24 (MKISQFGSLAFAPIVLLQLFIVQA) form the signal peptide. N-linked (GlcNAc...) asparagine glycans are attached at residues Asn-77, Asn-104, and Asn-120. The segment at 111–139 (FTPLPSSSRNETKSSQTTNTISSSTSTGG) is disordered. Residues 123 to 137 (KSSQTTNTISSSTST) show a composition bias toward low complexity. A lipid anchor (GPI-anchor amidated glycine) is attached at Gly-139. Positions 140 to 161 (VGSVKPCLYFVLMLETIAYLFS) are cleaved as a propeptide — removed in mature form.

Post-translationally, the GPI-anchor is attached to the protein in the endoplasmic reticulum and serves to target the protein to the cell surface. There, the glucosamine-inositol phospholipid moiety is cleaved off and the GPI-modified mannoprotein is covalently attached via its lipidless GPI glycan remnant to the 1,6-beta-glucan of the outer cell wall layer.

The protein resides in the secreted. Its subcellular location is the cell wall. It localises to the membrane. The chain is Cell wall protein YLR042C from Saccharomyces cerevisiae (strain ATCC 204508 / S288c) (Baker's yeast).